The chain runs to 316 residues: Aspartate carbamoyltransferase catalytic subunit (316 aa).

Carbamoyl phosphate-binding residues include Arg-60 and Thr-61. Lys-88 contributes to the L-aspartate binding site. Carbamoyl phosphate contacts are provided by Arg-110, His-138, and Gln-141. Arg-171 and Arg-225 together coordinate L-aspartate. Carbamoyl phosphate-binding residues include Gly-266 and Pro-267.

Belongs to the aspartate/ornithine carbamoyltransferase superfamily. ATCase family. In terms of assembly, heterododecamer (2C3:3R2) of six catalytic PyrB chains organized as two trimers (C3), and six regulatory PyrI chains organized as three dimers (R2).

It carries out the reaction carbamoyl phosphate + L-aspartate = N-carbamoyl-L-aspartate + phosphate + H(+). It functions in the pathway pyrimidine metabolism; UMP biosynthesis via de novo pathway; (S)-dihydroorotate from bicarbonate: step 2/3. Catalyzes the condensation of carbamoyl phosphate and aspartate to form carbamoyl aspartate and inorganic phosphate, the committed step in the de novo pyrimidine nucleotide biosynthesis pathway. The protein is Aspartate carbamoyltransferase catalytic subunit of Rhizorhabdus wittichii (strain DSM 6014 / CCUG 31198 / JCM 15750 / NBRC 105917 / EY 4224 / RW1) (Sphingomonas wittichii).